Reading from the N-terminus, the 71-residue chain is Large ribosomal subunit protein bL31 (71 aa).

Residues cysteine 16, cysteine 18, cysteine 37, and cysteine 40 each contribute to the Zn(2+) site.

It belongs to the bacterial ribosomal protein bL31 family. Type A subfamily. In terms of assembly, part of the 50S ribosomal subunit. Zn(2+) is required as a cofactor.

In terms of biological role, binds the 23S rRNA. This chain is Large ribosomal subunit protein bL31, found in Pseudoalteromonas translucida (strain TAC 125).